A 378-amino-acid chain; its full sequence is Ferrochelatase (378 aa).

Residues His-214 and Glu-295 each coordinate Fe cation.

The protein belongs to the ferrochelatase family.

The protein resides in the cytoplasm. The enzyme catalyses heme b + 2 H(+) = protoporphyrin IX + Fe(2+). Its pathway is porphyrin-containing compound metabolism; protoheme biosynthesis; protoheme from protoporphyrin-IX: step 1/1. Functionally, catalyzes the ferrous insertion into protoporphyrin IX. This chain is Ferrochelatase, found in Hydrogenovibrio crunogenus (strain DSM 25203 / XCL-2) (Thiomicrospira crunogena).